A 155-amino-acid polypeptide reads, in one-letter code: Interleukin-2 (155 aa).

An N-terminal signal peptide occupies residues 1-20; it reads MYKMQLLSCIALTLVLVANS. Thr-23 carries an O-linked (GalNAc...) threonine glycan. Cys-79 and Cys-127 are joined by a disulfide.

It belongs to the IL-2 family.

The protein resides in the secreted. Its function is as follows. Cytokine produced by activated CD4-positive helper T-cells and to a lesser extend activated CD8-positive T-cells and natural killer (NK) cells that plays pivotal roles in the immune response and tolerance. Binds to a receptor complex composed of either the high-affinity trimeric IL-2R (IL2RA/CD25, IL2RB/CD122 and IL2RG/CD132) or the low-affinity dimeric IL-2R (IL2RB and IL2RG). Interaction with the receptor leads to oligomerization and conformation changes in the IL-2R subunits resulting in downstream signaling starting with phosphorylation of JAK1 and JAK3. In turn, JAK1 and JAK3 phosphorylate the receptor to form a docking site leading to the phosphorylation of several substrates including STAT5. This process leads to activation of several pathways including STAT, phosphoinositide-3-kinase/PI3K and mitogen-activated protein kinase/MAPK pathways. Functions as a T-cell growth factor and can increase NK-cell cytolytic activity as well. Promotes strong proliferation of activated B-cells and subsequently immunoglobulin production. Plays a pivotal role in regulating the adaptive immune system by controlling the survival and proliferation of regulatory T-cells, which are required for the maintenance of immune tolerance. Moreover, participates in the differentiation and homeostasis of effector T-cell subsets, including Th1, Th2, Th17 as well as memory CD8-positive T-cells. This is Interleukin-2 (IL2) from Halichoerus grypus (Gray seal).